We begin with the raw amino-acid sequence, 663 residues long: uncharacterized protein (663 aa).

The first 29 residues, 1-29 (MLDIGVIGRLKFATAFMAMSLLLVPAAEA), serve as a signal peptide directing secretion.

It belongs to the bacterial solute-binding protein 5 family.

The protein resides in the periplasm. Its function is as follows. Possible binding-protein with either a transport or enzymatic activity. This is an uncharacterized protein from Sinorhizobium fredii (strain NBRC 101917 / NGR234).